The sequence spans 209 residues: MGAILGKKIGMTRLFNEKREAVSCTIIQAGPCFVTQVKRADKEGYDAYQIGIGERKEKKVSKPLQGHYKKAGVAPGFKLAEFDFKELNQELELGSAVSVESFTEGEKVNVLGVSKGKGFAGVMKRHNFSGGQRTHGQSDRQRAPGSVGGSSDPSRVFKGTRMAGRMGSDNITVRNLVIFKIMPESNLIVIKGSVPGPKNSYVKIVSTKK.

Positions 124–156 (KRHNFSGGQRTHGQSDRQRAPGSVGGSSDPSRV) are disordered.

This sequence belongs to the universal ribosomal protein uL3 family. Part of the 50S ribosomal subunit. Forms a cluster with proteins L14 and L19.

In terms of biological role, one of the primary rRNA binding proteins, it binds directly near the 3'-end of the 23S rRNA, where it nucleates assembly of the 50S subunit. The sequence is that of Large ribosomal subunit protein uL3 from Pelodictyon phaeoclathratiforme (strain DSM 5477 / BU-1).